Reading from the N-terminus, the 298-residue chain is Probable 3-hydroxyacyl-CoA dehydrogenase F54C8.1 (298 aa).

This sequence belongs to the 3-hydroxyacyl-CoA dehydrogenase family. In terms of assembly, homodimer.

The protein resides in the mitochondrion matrix. The enzyme catalyses a (3S)-3-hydroxyacyl-CoA + NAD(+) = a 3-oxoacyl-CoA + NADH + H(+). The protein operates within lipid metabolism; fatty acid beta-oxidation. This chain is Probable 3-hydroxyacyl-CoA dehydrogenase F54C8.1, found in Caenorhabditis elegans.